The following is a 415-amino-acid chain: Levansucrase (415 aa).

Sucrose contacts are provided by Trp45, Asp46, Ala132, Arg202, and Asp203. Residue Asp46 is the Nucleophile of the active site. Catalysis depends on Glu287, which acts as the Proton donor/acceptor.

This sequence belongs to the glycosyl hydrolase 68 family.

The protein resides in the secreted. It catalyses the reaction [6)-beta-D-fructofuranosyl-(2-&gt;](n) alpha-D-glucopyranoside + sucrose = [6)-beta-D-fructofuranosyl-(2-&gt;](n+1) alpha-D-glucopyranoside + D-glucose. Catalyzes the synthesis of levan, a fructose polymer, by transferring the fructosyl moiety from sucrose to a growing acceptor molecule. The chain is Levansucrase from Erwinia amylovora (Fire blight bacteria).